A 207-amino-acid polypeptide reads, in one-letter code: MSNTWFTSDLHIGHKRLMEIRNLADDVEEHDATLAKAWDSVVGKDDTVWILGDISSGSTKGQIHALGWISDRPGRKRLILGNHDGPHPMNRDAHKLVGAYWMVFEHVSTAARIRVPLYGDAGGHTDVLLSHFPYVGDHTSEDRHTQWRLRDDGKILIHGHTHSPMILSRHIHRRQIHVGIDAWGRLVSRDEIYDLVNHIHEEEGVHT.

This Mycobacterium (Mycobacteriophage L5) protein is Gene 66 protein (66).